Reading from the N-terminus, the 150-residue chain is Putative FAD-linked sulfhydryl oxidase 088R (150 aa).

The ERV/ALR sulfhydryl oxidase domain maps to 24-128 (GPFGPSGFGP…VTLQKAICIY (105 aa)). A disulfide bond links Cys-74 and Cys-77.

FAD is required as a cofactor.

The enzyme catalyses 2 R'C(R)SH + O2 = R'C(R)S-S(R)CR' + H2O2. In terms of biological role, FAD-dependent sulfhydryl oxidase that catalyzes disulfide bond formation. The polypeptide is Putative FAD-linked sulfhydryl oxidase 088R (Dryophytes versicolor (chameleon treefrog)).